Reading from the N-terminus, the 253-residue chain is Small ribosomal subunit protein uS2 (253 aa).

This sequence belongs to the universal ribosomal protein uS2 family.

The polypeptide is Small ribosomal subunit protein uS2 (Hahella chejuensis (strain KCTC 2396)).